Reading from the N-terminus, the 313-residue chain is tRNA dimethylallyltransferase (313 aa).

17-24 (GPTASGKT) serves as a coordination point for ATP. Position 19–24 (19–24 (TASGKT)) interacts with substrate. Interaction with substrate tRNA stretches follow at residues 42–45 (DSAL), 166–170 (QRLSR), and 247–252 (RCVGYR).

This sequence belongs to the IPP transferase family. Monomer. Mg(2+) serves as cofactor.

It catalyses the reaction adenosine(37) in tRNA + dimethylallyl diphosphate = N(6)-dimethylallyladenosine(37) in tRNA + diphosphate. Catalyzes the transfer of a dimethylallyl group onto the adenine at position 37 in tRNAs that read codons beginning with uridine, leading to the formation of N6-(dimethylallyl)adenosine (i(6)A). The sequence is that of tRNA dimethylallyltransferase from Yersinia pseudotuberculosis serotype O:1b (strain IP 31758).